Reading from the N-terminus, the 176-residue chain is Isopentenyl-diphosphate Delta-isomerase (176 aa).

Positions 22 and 28 each coordinate Mn(2+). A Nudix hydrolase domain is found at 26–160 (LRHKAISVFI…PETFTPWLHI (135 aa)). The active site involves cysteine 62. Histidine 64 is a binding site for Mn(2+). Mg(2+) is bound at residue glutamate 82. Mn(2+) is bound by residues glutamate 108 and glutamate 110. The active site involves glutamate 110.

Belongs to the IPP isomerase type 1 family. It depends on Mg(2+) as a cofactor. The cofactor is Mn(2+).

Its subcellular location is the cytoplasm. It catalyses the reaction isopentenyl diphosphate = dimethylallyl diphosphate. Its pathway is isoprenoid biosynthesis; dimethylallyl diphosphate biosynthesis; dimethylallyl diphosphate from isopentenyl diphosphate: step 1/1. It functions in the pathway porphyrin-containing compound metabolism; chlorophyll biosynthesis. In terms of biological role, catalyzes the 1,3-allylic rearrangement of the homoallylic substrate isopentenyl (IPP) to its highly electrophilic allylic isomer, dimethylallyl diphosphate (DMAPP). The protein is Isopentenyl-diphosphate Delta-isomerase of Jannaschia sp. (strain CCS1).